The chain runs to 339 residues: Geranylgeranyl pyrophosphate synthase AN1592 (339 aa).

3 residues coordinate isopentenyl diphosphate: Lys41, Arg44, and His73. Asp80 and Asp84 together coordinate Mg(2+). Residue Arg89 participates in dimethylallyl diphosphate binding. Isopentenyl diphosphate is bound at residue Arg90. Dimethylallyl diphosphate contacts are provided by Lys192, Thr193, and Gln228. A Mg(2+)-binding site is contributed by Asp231. Residues Asn235, Lys245, and Lys255 each contribute to the dimethylallyl diphosphate site.

It belongs to the FPP/GGPP synthase family. It depends on Mg(2+) as a cofactor.

It catalyses the reaction isopentenyl diphosphate + dimethylallyl diphosphate = (2E)-geranyl diphosphate + diphosphate. It carries out the reaction isopentenyl diphosphate + (2E)-geranyl diphosphate = (2E,6E)-farnesyl diphosphate + diphosphate. The enzyme catalyses isopentenyl diphosphate + (2E,6E)-farnesyl diphosphate = (2E,6E,10E)-geranylgeranyl diphosphate + diphosphate. Its pathway is secondary metabolite biosynthesis. In terms of biological role, geranylgeranyl pyrophosphate synthase; part of the gene cluster that mediates the biosynthesis of erinacines, cyathane-xylosides that show unique biological activities, including leishmanicidal activity, stimulating activity for nerve growth-factor synthesis, and agonistic activity toward the kappa opioid receptor. The geranylgeranyl diphosphate (GGPP) synthase eriE catalyzes the first step in erinacines biosynthesis via conversion of farnesyl pyrophosphate and isopentyl pyrophosphate into geranylgeranyl pyrophosphate (GGPP). GGPP is then substrate of the diterpene cyclase eriG for the production of cyatha-3,12-diene. The cytochrome P450 monooxygenase eriI then hydroxylates cyatha-3,12-diene at C-14 of the seven-membered ring to produce erinacol, which is further hydroxylated at C-15 by the cytochrome P450 monooxygenase eriC to yield cyathadiol. The cytochrome P450 monooxygenase eriA then catalyzes C-11 hydroxylation in the presence of the short chain dehydrogenase/reductase (SDR) eriH, which leads to the production of cyathatriol. The acetyltransferase eriL converts cyathatriol into 11-O-acetyl-cyathatriol. The SDR eriH catalyzes further oxidation of 11-O-acetyl-cyathatriol into 1-O-acetylcyathin A3. Finally, the glycosyl transferase eriJ tranfers xylose from UDP-xylose onto C-14 of 11-O-acetyl-cyathatriol to form eracine Q. EriJ is also able to convert 11-O-acetyl-cyathatriol to eracine Q2 by using UDP-D-glucose as cosubstrate, but at a lower rate. In the absence of eriL and eriJ, the SDR eriH is able to convert cyathatriol to cyathin A3; this is likely a switching mechanism in the biosynthesis of cyathins (C-14 ketogroup)and erinacines (C-14 glycosylated group). The roles of the SDR eriB, the polyprenyl transferase eriF and the dehydrogenase eriK have still to be identified. This chain is Geranylgeranyl pyrophosphate synthase AN1592, found in Hericium erinaceus (Lion's mane mushroom).